Consider the following 295-residue polypeptide: Ribosomal protein L11 methyltransferase (295 aa).

4 residues coordinate S-adenosyl-L-methionine: threonine 150, glycine 171, aspartate 193, and asparagine 232.

It belongs to the methyltransferase superfamily. PrmA family.

It is found in the cytoplasm. It catalyses the reaction L-lysyl-[protein] + 3 S-adenosyl-L-methionine = N(6),N(6),N(6)-trimethyl-L-lysyl-[protein] + 3 S-adenosyl-L-homocysteine + 3 H(+). Methylates ribosomal protein L11. In Neisseria meningitidis serogroup C / serotype 2a (strain ATCC 700532 / DSM 15464 / FAM18), this protein is Ribosomal protein L11 methyltransferase.